The primary structure comprises 316 residues: Polyprenyl transferase dpchC (316 aa).

Helical transmembrane passes span 24–44 (PLFTTFAGLWSTLLAGGAKMA), 60–80 (ALCFVASYLFCGAGMVWNDWI), 105–125 (EAMVWMVLQAALSWGVLEVML), 154–174 (MLGIYPQYILAFTIAWPAVIG), 192–212 (CLPLCTMVFFWTIYLNTAYSY), 234–254 (IHLLLVALVSPILVCLPIYLF), 258–278 (SLWLWLSWMGVWTASLAQQLV), and 296–316 (FILGIWTILACVVQVFLTGSA).

Belongs to the UbiA prenyltransferase family. Mg(2+) is required as a cofactor.

It is found in the membrane. Its pathway is secondary metabolite biosynthesis; terpenoid biosynthesis. In terms of biological role, polyprenyl transferase; part of the gene cluster that mediates the biosynthesis of the diterpenoid pyrones higginsianins A and B. The first step of the pathway is the synthesis of the alpha-pyrone moiety by the polyketide synthase dpchA via condensation of one acetyl-CoA starter unit with 3 malonyl-CoA units and 2 methylations. The alpha-pyrone is then combined with geranylgeranyl pyrophosphate (GGPP) formed by the GGPP synthase dpchD through the action of the prenyltransferase dpchC to yield a linear alpha-pyrone diterpenoid. Subsequent steps in the diterpenoid pyrone biosynthetic pathway involve the decalin core formation, which is initiated by the epoxidation of the C10-C11 olefin by the FAD-dependent oxidoreductase dpchE, and is followed by a cyclization cascade catalyzed by the terpene cyclase dpchB. The short chain dehydrogenase/reductase dpchG then oxidizes the 8S hydroxy group to a ketone and the short chain dehydrogenase/reductase dpchH reduces the ketone to the 8R hydroxy group to yield higginsianin B. Finally, the FAD-dependent oxidoreductase dpchF converts higginsianin B into higginsianin A. In Colletotrichum higginsianum (strain IMI 349063) (Crucifer anthracnose fungus), this protein is Polyprenyl transferase dpchC.